The chain runs to 531 residues: 5-(hydroxymethyl)furfural oxidase (531 aa).

Residues 15–16 (TA), 36–37 (EA), tryptophan 68, leucine 94, glycine 98, 102–105 (NMVV), valine 233, and tryptophan 466 each bind FAD. The active-site Proton acceptor is the histidine 467. Residues alanine 501 and 512 to 513 (TN) contribute to the FAD site.

Belongs to the GMC oxidoreductase family. Monomer. FAD serves as cofactor.

The catalysed reaction is 5-hydroxymethylfurfural + 3 O2 + 2 H2O = 2,5-dicarboxyfuran + 3 H2O2 + 2 H(+). It carries out the reaction benzylthiol + O2 = benzothialdehyde + H2O2. Functionally, involved in the degradation and detoxification of 5-(hydroxymethyl)furfural (HMF) by mediating its oxidation to furan-2,5-dicarboxylate (FDCA), a biobased platform chemical for the production of polymers. Active with a wide range of aromatic and aliphatic primary alcohols and aldehydes: acts on alcohol groups and requires the spontaneous hydration of aldehyde groups for their oxidation. To a lesser extent, is also able to catalyze the oxidation of thiols that are structurally similar to its alcohol substrates, yielding the corresponding thiocarbonyls. The sequence is that of 5-(hydroxymethyl)furfural oxidase from Methylovorus sp. (strain MP688).